The sequence spans 152 residues: Multiprotein-bridging factor 1 (152 aa).

Composition is skewed to polar residues over residues 1-11 (MSSDWDTNTVI) and 22-32 (PRQQVARTQGQ). The segment at 1–32 (MSSDWDTNTVIGQRVRTGGSGPRQQVARTQGQ) is disordered. Positions 86–140 (IAKGRGDKGMTQKDLATRINEKPTVINDYEAGRAIPNQQILAKMERALGVKLRGK) constitute an HTH cro/C1-type domain. The H-T-H motif DNA-binding region spans 97-116 (QKDLATRINEKPTVINDYEA).

The protein belongs to the MBF1 family.

Its function is as follows. Transcriptional coactivator that stimulates GCN4-dependent transcriptional activity by bridging the DNA-binding region of GCN4 and TBP (SPT15), thereby recruiting TBP to GCN4-bound promoters. Involved in induction of the ribosome quality control (RQC) pathway; a pathway that degrades nascent peptide chains during problematic translation. Required to prevent stalled ribosomes from frameshifting. The polypeptide is Multiprotein-bridging factor 1 (MBF1) (Eremothecium gossypii (strain ATCC 10895 / CBS 109.51 / FGSC 9923 / NRRL Y-1056) (Yeast)).